The primary structure comprises 223 residues: Ribosome maturation factor RimM (223 aa).

In terms of domain architecture, PRC barrel spans 142–223; sequence ADEFYWVDLI…RIVVDWEADY (82 aa).

The protein belongs to the RimM family. As to quaternary structure, binds ribosomal protein uS19.

Its subcellular location is the cytoplasm. An accessory protein needed during the final step in the assembly of 30S ribosomal subunit, possibly for assembly of the head region. Essential for efficient processing of 16S rRNA. May be needed both before and after RbfA during the maturation of 16S rRNA. It has affinity for free ribosomal 30S subunits but not for 70S ribosomes. This chain is Ribosome maturation factor RimM, found in Burkholderia multivorans (strain ATCC 17616 / 249).